A 560-amino-acid polypeptide reads, in one-letter code: uncharacterized protein (560 aa).

Positions 18 to 44 (CLRCRRRKVKCDRQYPCSRCKESEESC) form a DNA-binding region, zn(2)-C6 fungal-type. The interval 60–80 (LSRPITRETDSSAHQETRTRL) is disordered. Basic and acidic residues predominate over residues 64 to 80 (ITRETDSSAHQETRTRL). Residues 182-202 (FATSIILIVTAIAVALSLESF) form a helical membrane-spanning segment.

The protein localises to the nucleus membrane. This is an uncharacterized protein from Schizosaccharomyces pombe (strain 972 / ATCC 24843) (Fission yeast).